The primary structure comprises 394 residues: QWRF motif-containing protein 7 (394 aa).

Positions 1 to 171 (MATTGRRLRP…ESPVSKAKIR (171 aa)) are disordered. Low complexity predominate over residues 14–67 (NNNRSRTISSSISLPVSLNASLSSSTSSSSSSSPSNSSKRVMITRSQSTTRSSR). The span at 85-96 (NSASRSQEINNG) shows a compositional bias: polar residues. Positions 97–110 (RSRESFARYLEQRT) are enriched in basic and acidic residues. Composition is skewed to polar residues over residues 111-120 (RGSPRSNASS) and 142-157 (TMKT…TSMC). The short motif at 211-214 (QWRF) is the QWRF motif element.

Belongs to the QWRF family.

In Arabidopsis thaliana (Mouse-ear cress), this protein is QWRF motif-containing protein 7 (QWRF7).